Consider the following 529-residue polypeptide: Bifunctional purine biosynthesis protein PurH (529 aa).

The 148-residue stretch at 1–148 (MQQRRPIRRA…KNHKDVAIVV (148 aa)) folds into the MGS-like domain.

Belongs to the PurH family.

It catalyses the reaction (6R)-10-formyltetrahydrofolate + 5-amino-1-(5-phospho-beta-D-ribosyl)imidazole-4-carboxamide = 5-formamido-1-(5-phospho-D-ribosyl)imidazole-4-carboxamide + (6S)-5,6,7,8-tetrahydrofolate. It carries out the reaction IMP + H2O = 5-formamido-1-(5-phospho-D-ribosyl)imidazole-4-carboxamide. It functions in the pathway purine metabolism; IMP biosynthesis via de novo pathway; 5-formamido-1-(5-phospho-D-ribosyl)imidazole-4-carboxamide from 5-amino-1-(5-phospho-D-ribosyl)imidazole-4-carboxamide (10-formyl THF route): step 1/1. It participates in purine metabolism; IMP biosynthesis via de novo pathway; IMP from 5-formamido-1-(5-phospho-D-ribosyl)imidazole-4-carboxamide: step 1/1. This chain is Bifunctional purine biosynthesis protein PurH, found in Pectobacterium atrosepticum (strain SCRI 1043 / ATCC BAA-672) (Erwinia carotovora subsp. atroseptica).